Reading from the N-terminus, the 92-residue chain is Small ribosomal subunit protein uS19 (92 aa).

It belongs to the universal ribosomal protein uS19 family.

Its function is as follows. Protein S19 forms a complex with S13 that binds strongly to the 16S ribosomal RNA. The sequence is that of Small ribosomal subunit protein uS19 from Anoxybacillus flavithermus (strain DSM 21510 / WK1).